A 370-amino-acid polypeptide reads, in one-letter code: Nematocyst expressed protein 4 (370 aa).

The first 19 residues, 1–19 (MAWTLVLLVLLGTSSCLDA), serve as a signal peptide directing secretion. Positions 34–55 (SGSGSGEEGSSGSGSAPEPVRD) are disordered. Positions 36 to 45 (SGSGEEGSSG) are enriched in gly residues. 3 ShKT domains span residues 70–102 (CLDK…CRFC), 113–149 (CTDA…CKLC), and 155–190 (GKKF…CEVH). Cystine bridges form between C70–C102, C77–C95, C84–C99, C113–C149, C121–C142, C131–C146, C164–C183, and C173–C187. A compositionally biased stretch (pro residues) spans 306–340 (PYPPPPPPYPEQVPPPPPPPPPPPPPPPYPYPYPY). Residues 306 to 370 (PYPPPPPPYP…HHKENHSKKS (65 aa)) are disordered. Residues 349-370 (HKSKKHAKHHEKHHKENHSKKS) are compositionally biased toward basic residues.

The protein belongs to the NEP3 family. In terms of tissue distribution, nematocytes. In late planulae, transcripts are found throughout the ectoderm in nematocytes, with high concentration of expressing cells in the oral pole. In primary polyps, is expressed in nematocytes in the body wall and physa ectoderm and in the upper and lower pharynx.

It localises to the nematocyst. The protein resides in the secreted. This is Nematocyst expressed protein 4 from Nematostella vectensis (Starlet sea anemone).